Here is a 90-residue protein sequence, read N- to C-terminus: YcgL domain-containing protein plu2139 (90 aa).

Residues M1–L85 enclose the YcgL domain.

The polypeptide is YcgL domain-containing protein plu2139 (Photorhabdus laumondii subsp. laumondii (strain DSM 15139 / CIP 105565 / TT01) (Photorhabdus luminescens subsp. laumondii)).